A 94-amino-acid polypeptide reads, in one-letter code: Histone-like DNA-binding protein (94 aa).

Belongs to the bacterial histone-like protein family.

This chain is Histone-like DNA-binding protein, found in Rickettsia bellii (strain RML369-C).